A 315-amino-acid chain; its full sequence is Ribosomal protein L11 methyltransferase (315 aa).

Residues T164, G185, D207, and N249 each contribute to the S-adenosyl-L-methionine site.

Belongs to the methyltransferase superfamily. PrmA family.

The protein resides in the cytoplasm. It carries out the reaction L-lysyl-[protein] + 3 S-adenosyl-L-methionine = N(6),N(6),N(6)-trimethyl-L-lysyl-[protein] + 3 S-adenosyl-L-homocysteine + 3 H(+). In terms of biological role, methylates ribosomal protein L11. The protein is Ribosomal protein L11 methyltransferase of Lactobacillus gasseri (strain ATCC 33323 / DSM 20243 / BCRC 14619 / CIP 102991 / JCM 1131 / KCTC 3163 / NCIMB 11718 / NCTC 13722 / AM63).